The primary structure comprises 415 residues: Neuromedin-U receptor 2 (415 aa).

Over M1 to S49 the chain is Extracellular. N-linked (GlcNAc...) asparagine glycans are attached at residues N9 and N27. The chain crosses the membrane as a helical span at residues V50–I70. Residues L71–Y82 are Cytoplasmic-facing. A helical membrane pass occupies residues Y83–V103. Topologically, residues Y104–T123 are extracellular. C119 and C204 are joined by a disulfide. A helical transmembrane segment spans residues A124–V146. The Cytoplasmic portion of the chain corresponds to A147 to R165. Residues I166–G186 traverse the membrane as a helical segment. Residues I187–N214 lie on the Extracellular side of the membrane. N194 carries an N-linked (GlcNAc...) asparagine glycan. Residues F215–L235 form a helical membrane-spanning segment. Residues Y236–S265 lie on the Cytoplasmic side of the membrane. The chain crosses the membrane as a helical span at residues V266–I286. Residues D287–L301 are Extracellular-facing. The chain crosses the membrane as a helical span at residues A302–V322. The Cytoplasmic segment spans residues N323 to T415.

It belongs to the G-protein coupled receptor 1 family. As to expression, predominantly expressed in the CNS, particularly in the medulla oblongata, pontine reticular formation, spinal cord, and thalamus. High level in testis whereas lower levels are present in a variety of peripheral tissues including the gastrointestinal tract, genitourinary tract, liver, pancreas, adrenal gland, thyroid gland, lung, trachea, spleen and thymus.

It localises to the cell membrane. Its function is as follows. Receptor for the neuromedin-U and neuromedin-S neuropeptides. The polypeptide is Neuromedin-U receptor 2 (NMUR2) (Homo sapiens (Human)).